Reading from the N-terminus, the 275-residue chain is Aldo-keto reductase MSMEG_2408/MSMEI_2347 (275 aa).

Y49 functions as the Proton donor in the catalytic mechanism. NADPH is bound by residues L189, I227, K229, S230, V231, R235, S238, and N239. K262 participates in a covalent cross-link: Isoglutamyl lysine isopeptide (Lys-Gln) (interchain with Q-Cter in protein Pup).

Belongs to the aldo/keto reductase family.

The polypeptide is Aldo-keto reductase MSMEG_2408/MSMEI_2347 (Mycolicibacterium smegmatis (strain ATCC 700084 / mc(2)155) (Mycobacterium smegmatis)).